The sequence spans 278 residues: Putative phosphoenolpyruvate synthase regulatory protein (278 aa).

157–164 serves as a coordination point for ADP; that stretch reads GVSRSGKT.

This sequence belongs to the pyruvate, phosphate/water dikinase regulatory protein family. PSRP subfamily.

It carries out the reaction [pyruvate, water dikinase] + ADP = [pyruvate, water dikinase]-phosphate + AMP + H(+). The enzyme catalyses [pyruvate, water dikinase]-phosphate + phosphate + H(+) = [pyruvate, water dikinase] + diphosphate. Its function is as follows. Bifunctional serine/threonine kinase and phosphorylase involved in the regulation of the phosphoenolpyruvate synthase (PEPS) by catalyzing its phosphorylation/dephosphorylation. The chain is Putative phosphoenolpyruvate synthase regulatory protein from Vibrio parahaemolyticus serotype O3:K6 (strain RIMD 2210633).